The chain runs to 291 residues: Phosphatidylglycerol--prolipoprotein diacylglyceryl transferase (291 aa).

7 helical membrane passes run 21–41 (VSLH…MWLA), 60–80 (LLYA…VLFY), 96–116 (WDGG…MIWF), 130–150 (FIAP…FING), 198–218 (SQLY…NLFI), 225–245 (GAVS…VEFF), and 260–280 (ISMG…MMIW). An a 1,2-diacyl-sn-glycero-3-phospho-(1'-sn-glycerol)-binding site is contributed by Arg-143.

It belongs to the Lgt family.

The protein localises to the cell inner membrane. The enzyme catalyses L-cysteinyl-[prolipoprotein] + a 1,2-diacyl-sn-glycero-3-phospho-(1'-sn-glycerol) = an S-1,2-diacyl-sn-glyceryl-L-cysteinyl-[prolipoprotein] + sn-glycerol 1-phosphate + H(+). The protein operates within protein modification; lipoprotein biosynthesis (diacylglyceryl transfer). Catalyzes the transfer of the diacylglyceryl group from phosphatidylglycerol to the sulfhydryl group of the N-terminal cysteine of a prolipoprotein, the first step in the formation of mature lipoproteins. This is Phosphatidylglycerol--prolipoprotein diacylglyceryl transferase from Cronobacter sakazakii (strain ATCC BAA-894) (Enterobacter sakazakii).